The following is a 160-amino-acid chain: Dysbindin domain-containing protein 1 (160 aa).

Disordered regions lie at residues 1 to 34 and 95 to 160; these read MESP…GDTC and ADSD…PKED. Phosphoserine is present on residues Ser-3, Ser-97, and Ser-121. Positions 127–143 are enriched in basic and acidic residues; sequence TRAEQNREKQTPSDPER.

Belongs to the dysbindin family.

The polypeptide is Dysbindin domain-containing protein 1 (Dbndd1) (Rattus norvegicus (Rat)).